The sequence spans 404 residues: Cysteine desulfurase IscS (404 aa).

Pyridoxal 5'-phosphate-binding positions include alanine 75–threonine 76, asparagine 155, glutamine 183, and serine 203–histidine 205. Lysine 206 bears the N6-(pyridoxal phosphate)lysine mark. Threonine 243 is a pyridoxal 5'-phosphate binding site. The Cysteine persulfide intermediate role is filled by cysteine 328. [2Fe-2S] cluster is bound at residue cysteine 328.

The protein belongs to the class-V pyridoxal-phosphate-dependent aminotransferase family. NifS/IscS subfamily. Homodimer. Forms a heterotetramer with IscU, interacts with other sulfur acceptors. The cofactor is pyridoxal 5'-phosphate.

The protein resides in the cytoplasm. It carries out the reaction (sulfur carrier)-H + L-cysteine = (sulfur carrier)-SH + L-alanine. The protein operates within cofactor biosynthesis; iron-sulfur cluster biosynthesis. Functionally, master enzyme that delivers sulfur to a number of partners involved in Fe-S cluster assembly, tRNA modification or cofactor biosynthesis. Catalyzes the removal of elemental sulfur atoms from cysteine to produce alanine. Functions as a sulfur delivery protein for Fe-S cluster synthesis onto IscU, an Fe-S scaffold assembly protein, as well as other S acceptor proteins. This chain is Cysteine desulfurase IscS, found in Pseudomonas putida (strain GB-1).